We begin with the raw amino-acid sequence, 443 residues long: Glucose-6-phosphate isomerase (443 aa).

Glu285 functions as the Proton donor in the catalytic mechanism. Active-site residues include His306 and Lys420.

Belongs to the GPI family.

It localises to the cytoplasm. It carries out the reaction alpha-D-glucose 6-phosphate = beta-D-fructose 6-phosphate. The protein operates within carbohydrate biosynthesis; gluconeogenesis. It functions in the pathway carbohydrate degradation; glycolysis; D-glyceraldehyde 3-phosphate and glycerone phosphate from D-glucose: step 2/4. In terms of biological role, catalyzes the reversible isomerization of glucose-6-phosphate to fructose-6-phosphate. In Staphylococcus aureus (strain NCTC 8325 / PS 47), this protein is Glucose-6-phosphate isomerase.